The chain runs to 545 residues: Bifunctional purine biosynthesis protein PurH (545 aa).

The MGS-like domain occupies 1 to 150; it reads MTNTNRPIRR…KNHATVAIVT (150 aa).

This sequence belongs to the PurH family.

It carries out the reaction (6R)-10-formyltetrahydrofolate + 5-amino-1-(5-phospho-beta-D-ribosyl)imidazole-4-carboxamide = 5-formamido-1-(5-phospho-D-ribosyl)imidazole-4-carboxamide + (6S)-5,6,7,8-tetrahydrofolate. It catalyses the reaction IMP + H2O = 5-formamido-1-(5-phospho-D-ribosyl)imidazole-4-carboxamide. Its pathway is purine metabolism; IMP biosynthesis via de novo pathway; 5-formamido-1-(5-phospho-D-ribosyl)imidazole-4-carboxamide from 5-amino-1-(5-phospho-D-ribosyl)imidazole-4-carboxamide (10-formyl THF route): step 1/1. The protein operates within purine metabolism; IMP biosynthesis via de novo pathway; IMP from 5-formamido-1-(5-phospho-D-ribosyl)imidazole-4-carboxamide: step 1/1. The sequence is that of Bifunctional purine biosynthesis protein PurH from Bifidobacterium longum (strain DJO10A).